Here is a 398-residue protein sequence, read N- to C-terminus: Nocardicin C N-oxygenase (398 aa).

Residues 63–90 are disordered; the sequence is RARAAGREETPRVTPEAAPAGSMLSMDP. Heme is bound by residues histidine 93, arginine 97, arginine 289, histidine 345, and cysteine 347.

The protein belongs to the cytochrome P450 family. It depends on heme as a cofactor.

It carries out the reaction nocardicin C + 4 reduced [2Fe-2S]-[ferredoxin] + 2 O2 + 2 H(+) = nocardicin A + 4 oxidized [2Fe-2S]-[ferredoxin] + 3 H2O. Its pathway is antibiotic biosynthesis. Involved in the biosynthesis of the beta-lactam antibiotic nocardicin A. Catalyzes the conversion of nocardicin C to nocardicin A. Cannot use nocardicin G. The sequence is that of Nocardicin C N-oxygenase from Nocardia uniformis subsp. tsuyamanensis.